Consider the following 556-residue polypeptide: TNF receptor-associated factor 6-A (556 aa).

Residues 72–111 (CPICLMALREAVQTPCGHRFCKACILKSLRNAGHKCPVDN) form an RING-type; degenerate zinc finger. 2 TRAF-type zinc fingers span residues 148-204 (RHLE…EDKS) and 205-261 (GHEL…HNLA). Positions 384–533 (NGVFIWRIKG…NDTLLVRCSV (150 aa)) constitute an MATH domain.

Belongs to the TNF receptor-associated factor family. A subfamily. Homotrimer. Homooligomer. Interacts with tifa. Highly expressed in ovary and moderately expressed in kidney, spleen, stomach, colon and testis.

It localises to the cytoplasm. It is found in the cell cortex. The protein localises to the nucleus. Its subcellular location is the lipid droplet. The catalysed reaction is S-ubiquitinyl-[E2 ubiquitin-conjugating enzyme]-L-cysteine + [acceptor protein]-L-lysine = [E2 ubiquitin-conjugating enzyme]-L-cysteine + N(6)-ubiquitinyl-[acceptor protein]-L-lysine.. It functions in the pathway protein modification; protein ubiquitination. In terms of biological role, E3 ubiquitin ligase that, together with UBE2N and UBE2V1, mediates the synthesis of 'Lys-63'-linked-polyubiquitin chains conjugated to proteins, such as IKBKG, IRAK1, AKT1 and AKT2. Also mediates ubiquitination of free/unanchored polyubiquitin chain that leads to MAP3K7 activation. This chain is TNF receptor-associated factor 6-A (traf6-a), found in Xenopus laevis (African clawed frog).